The following is a 251-amino-acid chain: Ditrans,polycis-undecaprenyl-diphosphate synthase ((2E,6E)-farnesyl-diphosphate specific) (251 aa).

Residue D21 is part of the active site. Mg(2+) is bound at residue D21. Substrate is bound by residues 22–25, W26, H38, and 66–68; these read GNNR and SSE. Residue N69 is the Proton acceptor of the active site. Substrate contacts are provided by residues W70, R72, R189, and 195–197; that span reads RIS. E208 is a Mg(2+) binding site.

It belongs to the UPP synthase family. As to quaternary structure, homodimer. Requires Mg(2+) as cofactor.

The catalysed reaction is 8 isopentenyl diphosphate + (2E,6E)-farnesyl diphosphate = di-trans,octa-cis-undecaprenyl diphosphate + 8 diphosphate. Catalyzes the sequential condensation of isopentenyl diphosphate (IPP) with (2E,6E)-farnesyl diphosphate (E,E-FPP) to yield (2Z,6Z,10Z,14Z,18Z,22Z,26Z,30Z,34E,38E)-undecaprenyl diphosphate (di-trans,octa-cis-UPP). UPP is the precursor of glycosyl carrier lipid in the biosynthesis of bacterial cell wall polysaccharide components such as peptidoglycan and lipopolysaccharide. The polypeptide is Ditrans,polycis-undecaprenyl-diphosphate synthase ((2E,6E)-farnesyl-diphosphate specific) (Pseudomonas syringae pv. tomato (strain ATCC BAA-871 / DC3000)).